The following is a 404-amino-acid chain: 6-deoxyerythronolide B hydroxylase (404 aa).

Position 351 (Cys-351) interacts with heme.

It belongs to the cytochrome P450 family. The cofactor is heme.

It is found in the cytoplasm. It carries out the reaction 6-deoxyerythronolide B + 2 reduced [2Fe-2S]-[ferredoxin] + O2 + 2 H(+) = erythronolide B + 2 oxidized [2Fe-2S]-[ferredoxin] + H2O. It functions in the pathway antibiotic biosynthesis; erythromycin biosynthesis. Functionally, catalyzes the conversion of 6-deoxyerythronolide B (6-DEB) to erythronolide B (EB) by the insertion of an oxygen at the 6S position of 6-DEB. Requires the participation of a ferredoxin and a ferredoxin reductase for the transfer of electrons from NADPH to the monooxygenase. This chain is 6-deoxyerythronolide B hydroxylase, found in Saccharopolyspora erythraea (strain ATCC 11635 / DSM 40517 / JCM 4748 / NBRC 13426 / NCIMB 8594 / NRRL 2338).